Consider the following 61-residue polypeptide: Beta-insect depressant toxin BotIT5 (61 aa).

One can recognise an LCN-type CS-alpha/beta domain in the interval 1–61 (DGYIRKRDGC…TWKSETNTCG (61 aa)). Cystine bridges form between cysteine 10-cysteine 60, cysteine 14-cysteine 35, cysteine 21-cysteine 42, and cysteine 25-cysteine 44. Glycine 61 is subject to Glycine amide.

Belongs to the long (4 C-C) scorpion toxin superfamily. Sodium channel inhibitor family. Beta subfamily. As to expression, expressed by the venom gland.

It localises to the secreted. Functionally, depressant insect beta-toxins cause a transient contraction paralysis followed by a slow flaccid paralysis. They bind voltage-independently at site-4 of sodium channels (Nav) and shift the voltage of activation toward more negative potentials thereby affecting sodium channel activation and promoting spontaneous and repetitive firing. This toxin is active only on insects. This Buthus occitanus tunetanus (Common European scorpion) protein is Beta-insect depressant toxin BotIT5.